Here is a 347-residue protein sequence, read N- to C-terminus: uncharacterized protein (347 aa).

It is found in the cytoplasm. Its subcellular location is the nucleus. This is an uncharacterized protein from Schizosaccharomyces pombe (strain 972 / ATCC 24843) (Fission yeast).